The primary structure comprises 392 residues: MNLNKNLPTGTRDKLFREAQAAYKIEQQVNHYFEKRGFKRIETPVIEFEDVFSSEHQADAKLYRFFDEKGRLTVLRPDMTLPIGRVVSTTGVMLPLKLSYSGKIFRANEDFGGEQNEQTQAGIEIIGYPSIKAEIECILSGIGVLNALEIPNFQIELGHAAIYRRVIQLLNLSETAEIDFRQLIQNKSLTGIKRFVANNPSTLDDFILAIPRLFGPATAILNQAKSLTTDKGILTALREMETIVEAVSYTADISVDLGLVQDFHYYTGIIFRGYADLAADNFLSGGRYDHLLEQFTSSSSPAVGLALNLDSLTTLQNRAGIIKKQTPTTLLIHYDLEALPQAEKFMQETPNSELSFFETASNAISFAKKWHIPEVVHVSSQGIQTILQREVD.

It belongs to the class-II aminoacyl-tRNA synthetase family. HisZ subfamily. In terms of assembly, heteromultimer composed of HisG and HisZ subunits.

It localises to the cytoplasm. Its pathway is amino-acid biosynthesis; L-histidine biosynthesis; L-histidine from 5-phospho-alpha-D-ribose 1-diphosphate: step 1/9. In terms of biological role, required for the first step of histidine biosynthesis. May allow the feedback regulation of ATP phosphoribosyltransferase activity by histidine. In Listeria monocytogenes serotype 4b (strain F2365), this protein is ATP phosphoribosyltransferase regulatory subunit.